The sequence spans 420 residues: Alpha-ketoglutarate-dependent xanthine dioxygenase xan-1 (420 aa).

2 residues coordinate Fe cation: His157 and Asp159. Positions 206 and 336 each coordinate 2-oxoglutarate. A Fe cation-binding site is contributed by His351. 2-oxoglutarate is bound at residue Arg366. Arg366 provides a ligand contact to substrate.

This sequence belongs to the TfdA dioxygenase family. The cofactor is Fe(2+).

It localises to the cytoplasm. It is found in the cytosol. The enzyme catalyses xanthine + 2-oxoglutarate + O2 = urate + succinate + CO2. Functionally, alpha-ketoglutarate-dependent xanthine dioxygenase is a non-heme mononuclear Fe(2+) enzyme that decarboxylates alpha-ketoglutarate to succinate and CO(2) while hydroxylating xanthine to generate uric acid. Allows xanthine utilization as a nitrogen source. This is Alpha-ketoglutarate-dependent xanthine dioxygenase xan-1 from Neurospora crassa (strain ATCC 24698 / 74-OR23-1A / CBS 708.71 / DSM 1257 / FGSC 987).